A 400-amino-acid polypeptide reads, in one-letter code: Integumentary mucin A.1 (400 aa).

A signal peptide spans 1–20; that stretch reads MKHIILCIHFLLMVVGLGQA. 2 consecutive P-type domains span residues 21-64 and 72-115; these read QDCS…FYNA and LECS…YART. Cystine bridges form between C23/C49, C33/C48, and C43/C60. N-linked (GlcNAc...) asparagine glycosylation is present at N63. Disulfide bonds link C74/C100, C84/C99, and C94/C111. Low complexity-rich tracts occupy residues 122 to 264 and 272 to 299; these read PDTT…DTTP and ETTT…ETTT. The segment at 122 to 302 is disordered; the sequence is PDTTTASTTA…TTTETTTAPP (181 aa). Tandem repeats lie at residues 127–135, 136–144, 145–153, 154–162, 163–171, 172–180, 181–189, 190–198, 199–207, 208–216, 217–225, 226–234, 235–243, and 244–252. The segment at 127–261 is 15 X 9 AA approximate tandem repeats of [AV]-[SP]-T-T-[AP]-E-T-T-T; that stretch reads ASTTAETTTV…TEPTTTPTTD (135 aa). One copy of the 1-15; approximate repeat lies at 253 to 261; the sequence is EPTTTPTTD. 7 tandem repeats follow at residues 272 to 275, 276 to 279, 280 to 283, 284 to 287, 288 to 291, 292 to 295, and 296 to 299. Residues 272–299 form a 7 X 4 AA repeats of E-T-T-T region; the sequence is ETTTETTTETTTETTTETTTETTTETTT. P-type domains lie at 298-343 and 351-394; these read TTAP…FYTE and AECT…FEKA. Disulfide bonds link C312/C327, C322/C339, C353/C379, C363/C378, and C373/C390.

Extensively O-glycosylated. Consist of about 70% carbohydrate and 30% protein. As to expression, expressed and stored exclusively in mature mucous glands of the skin.

The protein localises to the secreted. Could be involved in defense against microbial infections. Protects the epithelia from external environment. This chain is Integumentary mucin A.1, found in Xenopus laevis (African clawed frog).